Reading from the N-terminus, the 527-residue chain is Probable T-complex protein 1 subunit beta (527 aa).

Belongs to the TCP-1 chaperonin family. In terms of assembly, heterooligomeric complex of about 850 to 900 kDa that forms two stacked rings, 12 to 16 nm in diameter.

The protein localises to the cytoplasm. Molecular chaperone; assists the folding of proteins upon ATP hydrolysis. Known to play a role, in vitro, in the folding of actin and tubulin. The sequence is that of Probable T-complex protein 1 subunit beta (cct2) from Schizosaccharomyces pombe (strain 972 / ATCC 24843) (Fission yeast).